A 450-amino-acid polypeptide reads, in one-letter code: NADH-quinone oxidoreductase subunit H (450 aa).

9 helical membrane passes run 18–38 (WWLV…TPLL), 91–111 (ILAP…IPFG), 128–148 (LPVA…GIVL), 169–189 (VISY…DAGT), 201–221 (HTWY…SMVG), 262–282 (VTVS…PFPL), 292–312 (WWPV…FVWL), 324–344 (FMGL…MIVA), and 358–378 (SIAL…LLWK). The disordered stretch occupies residues 387–450 (APEKPVEPRG…TGPTQENSDD (64 aa)). Residues 390 to 400 (KPVEPRGRAEL) show a composition bias toward basic and acidic residues. Residues 433–450 (VSVTGAHSTGPTQENSDD) are compositionally biased toward polar residues.

It belongs to the complex I subunit 1 family. NDH-1 is composed of 14 different subunits. Subunits NuoA, H, J, K, L, M, N constitute the membrane sector of the complex.

It is found in the cell membrane. The enzyme catalyses a quinone + NADH + 5 H(+)(in) = a quinol + NAD(+) + 4 H(+)(out). Functionally, NDH-1 shuttles electrons from NADH, via FMN and iron-sulfur (Fe-S) centers, to quinones in the respiratory chain. The immediate electron acceptor for the enzyme in this species is believed to be ubiquinone. Couples the redox reaction to proton translocation (for every two electrons transferred, four hydrogen ions are translocated across the cytoplasmic membrane), and thus conserves the redox energy in a proton gradient. This subunit may bind ubiquinone. The protein is NADH-quinone oxidoreductase subunit H of Rhodococcus jostii (strain RHA1).